A 258-amino-acid chain; its full sequence is Acyl-[acyl-carrier-protein]--UDP-N-acetylglucosamine O-acyltransferase (258 aa).

Belongs to the transferase hexapeptide repeat family. LpxA subfamily. Homotrimer.

The protein localises to the cytoplasm. The enzyme catalyses a (3R)-hydroxyacyl-[ACP] + UDP-N-acetyl-alpha-D-glucosamine = a UDP-3-O-[(3R)-3-hydroxyacyl]-N-acetyl-alpha-D-glucosamine + holo-[ACP]. The protein operates within glycolipid biosynthesis; lipid IV(A) biosynthesis; lipid IV(A) from (3R)-3-hydroxytetradecanoyl-[acyl-carrier-protein] and UDP-N-acetyl-alpha-D-glucosamine: step 1/6. Involved in the biosynthesis of lipid A, a phosphorylated glycolipid that anchors the lipopolysaccharide to the outer membrane of the cell. The chain is Acyl-[acyl-carrier-protein]--UDP-N-acetylglucosamine O-acyltransferase from Myxococcus xanthus (strain DK1622).